The sequence spans 149 residues: MKKIAFGCDHVGFILKHEIVAHLVERGVEVIDKGTWSSERTDYPHYASQVALAVAGGEVDGGILICGTGVGISIAANKFAGIRAVVCSEPYSAQLSRQHNDTNVLAFGSRVVGLELAKMIVDAWLGAQYEGGRHQQRVEAITAIEQRRN.

9–10 serves as a coordination point for D-ribulose 5-phosphate; the sequence is DH. Catalysis depends on cysteine 66, which acts as the Proton acceptor. 67–71 provides a ligand contact to D-ribulose 5-phosphate; that stretch reads GTGVG. Catalysis depends on histidine 99, which acts as the Proton donor. D-ribulose 5-phosphate contacts are provided by asparagine 100, arginine 110, arginine 133, and arginine 137.

This sequence belongs to the LacAB/RpiB family. As to quaternary structure, homodimer, and homotetramer.

The enzyme catalyses aldehydo-D-ribose 5-phosphate = D-ribulose 5-phosphate. The catalysed reaction is D-allose 6-phosphate = D-allulose 6-phosphate. It functions in the pathway carbohydrate degradation; pentose phosphate pathway; D-ribose 5-phosphate from D-ribulose 5-phosphate (non-oxidative stage): step 1/1. With respect to regulation, inhibited by iodoacetate and glucose 6-phosphate. In terms of biological role, catalyzes the interconversion of ribulose-5-P and ribose-5-P. It probably also has activity on D-allose 6-phosphate. The polypeptide is Ribose-5-phosphate isomerase B (Escherichia coli (strain K12)).